A 164-amino-acid chain; its full sequence is FMN reductase (NADH) RutF (164 aa).

This sequence belongs to the non-flavoprotein flavin reductase family. RutF subfamily.

It carries out the reaction FMNH2 + NAD(+) = FMN + NADH + 2 H(+). Functionally, catalyzes the reduction of FMN to FMNH2 which is used to reduce pyrimidine by RutA via the Rut pathway. The protein is FMN reductase (NADH) RutF of Enterobacter cloacae subsp. cloacae (strain ATCC 13047 / DSM 30054 / NBRC 13535 / NCTC 10005 / WDCM 00083 / NCDC 279-56).